A 545-amino-acid chain; its full sequence is Carboxypeptidase Y homolog A (545 aa).

An N-terminal signal peptide occupies residues 1-18 (MKSSLALALLVGGAIASG). Positions 19–125 (PQQQVLREPV…RLDTYDLRVK (107 aa)) are excised as a propeptide. Intrachain disulfides connect C179/C418, C313/C327, C337/C360, C344/C353, and C382/C388. N-linked (GlcNAc...) asparagine glycosylation occurs at N210. S266 is a catalytic residue. The active site involves D457. Residues N487 and N507 are each glycosylated (N-linked (GlcNAc...) asparagine). H518 is an active-site residue.

The protein belongs to the peptidase S10 family.

Its subcellular location is the vacuole. The catalysed reaction is Release of a C-terminal amino acid with broad specificity.. Vacuolar carboxypeptidase involved in degradation of small peptides. Digests preferentially peptides containing an aliphatic or hydrophobic residue in P1' position, as well as methionine, leucine or phenylalanine in P1 position of ester substrate. This is Carboxypeptidase Y homolog A (CPYA) from Ajellomyces capsulatus (strain NAm1 / WU24) (Darling's disease fungus).